The following is a 312-amino-acid chain: Olfactory receptor 51A7 (312 aa).

At 1–25 (MSVLNNSEVKLFLLIGIPGLEHAHI) the chain is on the extracellular side. N5 carries an N-linked (GlcNAc...) asparagine glycan. Residues 26 to 46 (WFSIPICLMYLLAIMGNCTIL) traverse the membrane as a helical segment. At 47–54 (FIIKTEPS) the chain is on the cytoplasmic side. Residues 55–75 (LHEPMYYFLAMLAVSDMGLSL) traverse the membrane as a helical segment. At 76-99 (SSLPTMLRVFLFNAMGISPNACFA) the chain is on the extracellular side. A disulfide bond links C97 and C189. Residues 100–120 (QEFFIHGFTVMESSVLLIMSL) traverse the membrane as a helical segment. Topologically, residues 121 to 139 (DRFLAIHNPLRYSSILTSN) are cytoplasmic. The chain crosses the membrane as a helical span at residues 140–160 (RVAKMGLILAIRSILLVIPFP). Topologically, residues 161–196 (FTLRRLKYCQKNLLSHSYCLHQDTMKLACSDNKTNV) are extracellular. N192 is a glycosylation site (N-linked (GlcNAc...) asparagine). Residues 197–216 (IYGFFIALCTMLDLALIVLS) traverse the membrane as a helical segment. Residues 217–236 (YVLILKTILSIASLAERLKA) are Cytoplasmic-facing. A helical membrane pass occupies residues 237–257 (LNTCVSHICAVLTFYVPIITL). The Extracellular segment spans residues 258 to 272 (AAMHHFAKHKSPLVV). The chain crosses the membrane as a helical span at residues 273-293 (ILIADMFLLVPPLMNPIVYCV). Residues 294–312 (KTRQIWEKILGKLLNVCGR) are Cytoplasmic-facing.

It belongs to the G-protein coupled receptor 1 family.

It localises to the cell membrane. Functionally, odorant receptor. This Homo sapiens (Human) protein is Olfactory receptor 51A7 (OR51A7).